Reading from the N-terminus, the 296-residue chain is GTPase Era (296 aa).

Positions 3-170 (KSGFVTIIGR…IELMVKHLNE (168 aa)) constitute an Era-type G domain. A G1 region spans residues 11 to 18 (GRPNVGKS). 11-18 (GRPNVGKS) is a binding site for GTP. Residues 37-41 (QTTRN) form a G2 region. A G3 region spans residues 58–61 (DTPG). GTP contacts are provided by residues 58–62 (DTPGM) and 120–123 (NKID). Positions 120–123 (NKID) are G4. The segment at 149 to 151 (ISA) is G5. One can recognise a KH type-2 domain in the interval 201–277 (LSQEVPHGIA…NMKIWVKVKK (77 aa)).

This sequence belongs to the TRAFAC class TrmE-Era-EngA-EngB-Septin-like GTPase superfamily. Era GTPase family. In terms of assembly, monomer.

The protein localises to the cytoplasm. It localises to the cell membrane. In terms of biological role, an essential GTPase that binds both GDP and GTP, with rapid nucleotide exchange. Plays a role in 16S rRNA processing and 30S ribosomal subunit biogenesis and possibly also in cell cycle regulation and energy metabolism. The protein is GTPase Era of Clostridium acetobutylicum (strain ATCC 824 / DSM 792 / JCM 1419 / IAM 19013 / LMG 5710 / NBRC 13948 / NRRL B-527 / VKM B-1787 / 2291 / W).